Reading from the N-terminus, the 67-residue chain is Arasin 2 (67 aa).

The first 25 residues, 1–25 (MERRTLLVVLLVCSCVVAAAAEASP), serve as a signal peptide directing secretion. Residues 22 to 44 (EASPSRWPSPGRPRPFPGRPNPI) form a disordered region. Over residues 31-44 (PGRPRPFPGRPNPI) the composition is skewed to pro residues. Intrachain disulfides connect C50–C59 and C52–C57.

Interacts with chitin through the N-terminal region (26-48). This interaction may be important, since chitin is a component of the fungal cell wall, as well as of the crab exoskeleton (permitting a possible action of arasin in wound healing in case of lesions). Post-translationally, disulfide bonds are important for activity especially against Gram-negative bacteria, since the linearization of the peptide causes a strong decrease of activity on these bacteria. In terms of tissue distribution, mainly expressed in hemocytes. No or very low expression in heart, gills, inestines, and epidermis.

Antimicrobial peptide that has a large activity spectrum with activity against Gram-positive, Gram-negative bacteria, as well as against fungi. Shows activity at micromolar concentrations. Displays minimal inhibitory concentration (MIC) values lower than minimal bactericidal concentrations (MBC). May have a dual mode of action depending on the peptide concentrations. At MIC concentrations, the peptide penetrates into the cytoplasm of target cells (tested on the Gram-negative E.coli). The two inner membrane proteins YgdD and SbmA may be required for this uptake. At concentrations higher than MIC, arasin may act by disrupting membranes. Does not show hemolytic activity. This Hyas araneus (Atlantic lyre crab) protein is Arasin 2.